Consider the following 129-residue polypeptide: Small ribosomal subunit protein eS6 (129 aa).

This sequence belongs to the eukaryotic ribosomal protein eS6 family.

The protein is Small ribosomal subunit protein eS6 of Methanocorpusculum labreanum (strain ATCC 43576 / DSM 4855 / Z).